The following is a 335-amino-acid chain: MPAVLGFEGSANKIGVGVVRDGKVLANPRRTYVTPPGTGFLPGDTARHHRAVILDLLQEALTEAGLTSEDIDCIAYTKGPGMGAPLVSVAVVARTVAQLWNKPLLGVNHCIGHIEMGRLITGATNPTVLYVSGGNTQVIAYSEHRYRIFGETIDIAVGNCLDRFARVLKISNDPSPGYNIEQMAKRGKKLVELPYTVKGMDVSFSGILSFIEDVAQRMLATGECTPEDLCFSLQETVFAMLVEITERAMAHCGSQEALIVGGVGCNVRLQEMMETMCQERGARLFATDERFCIDNGAMIAQAGWEMFQAGHRTPLSESGITQRYRTDEVEVTWRD.

A divalent metal cation is bound by residues His109, His113, and Tyr130. Substrate is bound by residues 130–134 (YVSGG), Asp162, Gly177, Glu181, and Asn266. Asp294 contacts a divalent metal cation.

Belongs to the KAE1 / TsaD family. Component of the EKC/KEOPS complex composed of at least GON7, TP53RK, TPRKB, OSGEP and LAGE3; the whole complex dimerizes. Requires a divalent metal cation as cofactor.

The protein resides in the cytoplasm. The protein localises to the nucleus. It carries out the reaction L-threonylcarbamoyladenylate + adenosine(37) in tRNA = N(6)-L-threonylcarbamoyladenosine(37) in tRNA + AMP + H(+). Functionally, component of the EKC/KEOPS complex that is required for the formation of a threonylcarbamoyl group on adenosine at position 37 (t(6)A37) in tRNAs that read codons beginning with adenine. The complex is probably involved in the transfer of the threonylcarbamoyl moiety of threonylcarbamoyl-AMP (TC-AMP) to the N6 group of A37. OSGEP likely plays a direct catalytic role in this reaction, but requires other protein(s) of the complex to fulfill this activity. This Bos taurus (Bovine) protein is tRNA N6-adenosine threonylcarbamoyltransferase.